The primary structure comprises 296 residues: D-alanine--D-alanine ligase (296 aa).

The region spanning Thr-99 to Gln-292 is the ATP-grasp domain. An ATP-binding site is contributed by Gly-125–Thr-176. Residues Asp-247, Glu-259, and Asn-261 each contribute to the Mg(2+) site.

Belongs to the D-alanine--D-alanine ligase family. The cofactor is Mg(2+). Requires Mn(2+) as cofactor.

It is found in the cytoplasm. It catalyses the reaction 2 D-alanine + ATP = D-alanyl-D-alanine + ADP + phosphate + H(+). It participates in cell wall biogenesis; peptidoglycan biosynthesis. Functionally, cell wall formation. This Pseudothermotoga lettingae (strain ATCC BAA-301 / DSM 14385 / NBRC 107922 / TMO) (Thermotoga lettingae) protein is D-alanine--D-alanine ligase.